The following is a 349-amino-acid chain: Probable esterase Cgl0839 (349 aa).

Residues 60-329 (GTHQTWFQQY…EDIAGHLGLF (270 aa)) enclose the AB hydrolase-1 domain. The active-site Nucleophile is Ser142. Residues Asp296 and His325 contribute to the active site.

The protein belongs to the AB hydrolase superfamily. Acetyl esterase family. Homodimer.

Esterase that catalyzes the hydrolysis of 4-nitrophenyl acetate in vitro. This Corynebacterium glutamicum (strain ATCC 13032 / DSM 20300 / JCM 1318 / BCRC 11384 / CCUG 27702 / LMG 3730 / NBRC 12168 / NCIMB 10025 / NRRL B-2784 / 534) protein is Probable esterase Cgl0839.